The following is a 611-amino-acid chain: U-box domain-containing protein 12 (611 aa).

The U-box domain occupies 227–301 (IIPDEFRCPI…SQWCEANGIE (75 aa)). ARM repeat units lie at residues 355-394 (VNNRICIAEAGAIPLLVNLLSSSDPRTQEHAVTALLNLSI), 396-435 (ENNKASIVDSHAIPKIVEVLKTGSMETRENAAATLFSLSV), 437-476 (DENKVTIGAAGAIPPLINLLCDGSPRGKKDAATAIFNLCI), and 478-517 (QGNKVRAVKAGIVIHLMNFLVDPTGGMIDEALSLLSILAG).

The catalysed reaction is S-ubiquitinyl-[E2 ubiquitin-conjugating enzyme]-L-cysteine + [acceptor protein]-L-lysine = [E2 ubiquitin-conjugating enzyme]-L-cysteine + N(6)-ubiquitinyl-[acceptor protein]-L-lysine.. The protein operates within protein modification; protein ubiquitination. Possesses E3 ubiquitin-protein ligase in vitro. The protein is U-box domain-containing protein 12 (PUB12) of Oryza sativa subsp. japonica (Rice).